The following is a 396-amino-acid chain: Flavohemoprotein (396 aa).

One can recognise a Globin domain in the interval 1–136; it reads MLDTQTIAIV…LADVFIQRES (136 aa). H85 provides a ligand contact to heme b. Residues Y95 and E135 each act as charge relay system in the active site. The segment at 147–396 is reductase; it reads GGWRTLRRFR…YECFGPHKVI (250 aa). The region spanning 150–255 is the FAD-binding FR-type domain; the sequence is RTLRRFRIIK…APPRGDFFLD (106 aa). Residues Y188 and 204 to 207 each bind FAD; that span reads RQYS. An NADP(+)-binding site is contributed by 268-273; it reads GVGQTP. 389–392 provides a ligand contact to FAD; that stretch reads CFGP.

Belongs to the globin family. Two-domain flavohemoproteins subfamily. It in the C-terminal section; belongs to the flavoprotein pyridine nucleotide cytochrome reductase family. Heme b serves as cofactor. It depends on FAD as a cofactor.

The enzyme catalyses 2 nitric oxide + NADPH + 2 O2 = 2 nitrate + NADP(+) + H(+). It carries out the reaction 2 nitric oxide + NADH + 2 O2 = 2 nitrate + NAD(+) + H(+). Is involved in NO detoxification in an aerobic process, termed nitric oxide dioxygenase (NOD) reaction that utilizes O(2) and NAD(P)H to convert NO to nitrate, which protects the bacterium from various noxious nitrogen compounds. Therefore, plays a central role in the inducible response to nitrosative stress. The sequence is that of Flavohemoprotein from Yersinia pestis.